The sequence spans 208 residues: FMN-dependent NADH:quinone oxidoreductase (208 aa).

FMN contacts are provided by residues serine 9 and 15-17; that span reads SHS.

Belongs to the azoreductase type 1 family. In terms of assembly, homodimer. It depends on FMN as a cofactor.

It catalyses the reaction 2 a quinone + NADH + H(+) = 2 a 1,4-benzosemiquinone + NAD(+). The enzyme catalyses N,N-dimethyl-1,4-phenylenediamine + anthranilate + 2 NAD(+) = 2-(4-dimethylaminophenyl)diazenylbenzoate + 2 NADH + 2 H(+). Its function is as follows. Quinone reductase that provides resistance to thiol-specific stress caused by electrophilic quinones. Functionally, also exhibits azoreductase activity. Catalyzes the reductive cleavage of the azo bond in aromatic azo compounds to the corresponding amines. This is FMN-dependent NADH:quinone oxidoreductase from Bordetella petrii (strain ATCC BAA-461 / DSM 12804 / CCUG 43448).